The sequence spans 319 residues: Quinolinate synthase (319 aa).

Iminosuccinate contacts are provided by histidine 34 and serine 51. A [4Fe-4S] cluster-binding site is contributed by cysteine 96. Iminosuccinate is bound by residues 122–124 and serine 139; that span reads YIN. [4Fe-4S] cluster is bound at residue cysteine 182. Iminosuccinate-binding positions include 208–210 and threonine 225; that span reads HPE. Cysteine 276 is a binding site for [4Fe-4S] cluster.

The protein belongs to the quinolinate synthase family. Type 2 subfamily. [4Fe-4S] cluster is required as a cofactor.

The protein resides in the cytoplasm. It catalyses the reaction iminosuccinate + dihydroxyacetone phosphate = quinolinate + phosphate + 2 H2O + H(+). It functions in the pathway cofactor biosynthesis; NAD(+) biosynthesis; quinolinate from iminoaspartate: step 1/1. In terms of biological role, catalyzes the condensation of iminoaspartate with dihydroxyacetone phosphate to form quinolinate. The protein is Quinolinate synthase of Thermosynechococcus vestitus (strain NIES-2133 / IAM M-273 / BP-1).